The chain runs to 148 residues: Cytochrome c-type biogenesis protein CcmE (148 aa).

At 1–7 (MKPRHKK) the chain is on the cytoplasmic side. The helical; Signal-anchor for type II membrane protein transmembrane segment at 8 to 28 (LAIIASSVTALGVASVLVLNA) threads the bilayer. Residues 29–148 (FQSNLVFFFS…ADKARKTVMQ (120 aa)) are Periplasmic-facing. H123 and Y127 together coordinate heme.

The protein belongs to the CcmE/CycJ family.

It localises to the cell inner membrane. Its function is as follows. Heme chaperone required for the biogenesis of c-type cytochromes. Transiently binds heme delivered by CcmC and transfers the heme to apo-cytochromes in a process facilitated by CcmF and CcmH. This is Cytochrome c-type biogenesis protein CcmE from Nitrosospira multiformis (strain ATCC 25196 / NCIMB 11849 / C 71).